Consider the following 2205-residue polypeptide: Genome polyprotein (2205 aa).

G2 carries the N-myristoyl glycine; by host lipid modification. Topologically, residues 2–1518 are cytoplasmic; that stretch reads GAQVSSQKVG…NINRAMTILQ (1517 aa). Positions 579-599 are amphipathic alpha-helix; that stretch reads GLGDLIEGVVEGVTRNALTPL. The segment covering 598-613 has biased composition (polar residues); sequence PLTPVNNLPDTRSSGP. Residues 598 to 619 are disordered; that stretch reads PLTPVNNLPDTRSSGPAHSKET. Residues H899 and D917 each act as for protease 2A activity in the active site. Positions 934 and 936 each coordinate Zn(2+). The active-site For protease 2A activity is C988. Zn(2+) contacts are provided by C994 and H996. The segment at 1126–1198 is membrane-binding; it reads GDSWLKKFTE…HQSCPSQEHQ (73 aa). The oligomerization stretch occupies residues 1126–1264; it reads GDSWLKKFTE…SPGTGKSVAT (139 aa). The tract at residues 1147-1151 is RNA-binding; that stretch reads SNKIS. Positions 1230-1386 constitute an SF3 helicase domain; it reads EHTINNYVQF…SEYSRDGKLN (157 aa). ATP is bound at residue 1254 to 1261; that stretch reads GSPGTGKS. Zn(2+)-binding residues include C1394, C1397, C1406, and C1411. The C4-type zinc-finger motif lies at 1394–1411; that stretch reads CKNCHQPANFKRCCPLVC. The RNA-binding stretch occupies residues 1438-1445; it reads ERNRRSSI. Positions 1449–1454 are oligomerization; sequence MEALFQ. An intramembrane segment occupies 1519 to 1534; that stretch reads AVTTFAAVAGVVYVMY. Residues 1535-2205 lie on the Cytoplasmic side of the membrane; sequence KLFAGHQGAY…TLYRRWLDSF (671 aa). The residue at position 1544 (Y1544) is an O-(5'-phospho-RNA)-tyrosine. The 179-residue stretch at 1564–1742 folds into the Peptidase C3 domain; the sequence is GPGFDYAVAM…FAAALKRSYF (179 aa). Residues H1603, E1634, and C1710 each act as for protease 3C activity in the active site. The region spanning 1971 to 2086 is the RdRp catalytic domain; it reads MEEKLFDYTG…SYPHEVDASL (116 aa). Residues D1977 and D2072 each coordinate Mg(2+).

This sequence belongs to the picornaviruses polyprotein family. Interacts with capsid protein VP1 and capsid protein VP3 to form heterotrimeric protomers. In terms of assembly, interacts with capsid protein VP0, and capsid protein VP3 to form heterotrimeric protomers. Interacts with human PVR. Five protomers subsequently associate to form pentamers which serve as building blocks for the capsid. Interacts with capsid protein VP2, capsid protein VP3 and capsid protein VP4 following cleavage of capsid protein VP0. As to quaternary structure, interacts with capsid protein VP1 and capsid protein VP3 in the mature capsid. Interacts with capsid protein VP0 and capsid protein VP1 to form heterotrimeric protomers. Five protomers subsequently associate to form pentamers which serve as building blocks for the capsid. Interacts with capsid protein VP4 in the mature capsid. Interacts with protein 2C; this interaction may be important for virion morphogenesis. In terms of assembly, interacts with capsid protein VP1 and capsid protein VP3. As to quaternary structure, homodimer. Homohexamer; forms a hexameric ring structure with 6-fold symmetry characteristic of AAA+ ATPases. Interacts (via N-terminus) with host RTN3 (via reticulon domain); this interaction is important for viral replication. Interacts with capsid protein VP3; this interaction may be important for virion morphogenesis. In terms of assembly, interacts with protein 3CD. As to quaternary structure, homodimer. Interacts with host GBF1. Interacts (via GOLD domain) with host ACBD3 (via GOLD domain); this interaction allows the formation of a viral protein 3A/ACBD3 heterotetramer with a 2:2 stoichiometry, which will stimulate the recruitment of host PI4KB in order to synthesize PI4P at the viral RNA replication sites. Interacts with RNA-directed RNA polymerase. In terms of assembly, interacts with protein 3AB and with RNA-directed RNA polymerase. As to quaternary structure, interacts with Viral protein genome-linked and with protein 3CD. Requires Mg(2+) as cofactor. Post-translationally, specific enzymatic cleavages in vivo by the viral proteases yield processing intermediates and the mature proteins. In terms of processing, myristoylation is required for the formation of pentamers during virus assembly. Further assembly of 12 pentamers and a molecule of genomic RNA generates the provirion. During virion maturation, immature virions are rendered infectious following cleavage of VP0 into VP4 and VP2. This maturation seems to be an autocatalytic event triggered by the presence of RNA in the capsid and it is followed by a conformational change infectious virion. Post-translationally, myristoylation is required during RNA encapsidation and formation of the mature virus particle. In terms of processing, VPg is uridylylated by the polymerase into VPg-pUpU. This acts as a nucleotide-peptide primer for the genomic RNA replication.

It is found in the virion. The protein resides in the host cytoplasm. It localises to the host cytoplasmic vesicle membrane. Its subcellular location is the host nucleus. It catalyses the reaction a ribonucleoside 5'-triphosphate + H2O = a ribonucleoside 5'-diphosphate + phosphate + H(+). The enzyme catalyses Selective cleavage of Tyr-|-Gly bond in the picornavirus polyprotein.. It carries out the reaction RNA(n) + a ribonucleoside 5'-triphosphate = RNA(n+1) + diphosphate. The catalysed reaction is Selective cleavage of Gln-|-Gly bond in the poliovirus polyprotein. In other picornavirus reactions Glu may be substituted for Gln, and Ser or Thr for Gly.. Its activity is regulated as follows. Replication or transcription is subject to high level of random mutations by the nucleotide analog ribavirin. Functionally, forms an icosahedral capsid of pseudo T=3 symmetry with capsid proteins VP2 and VP3. The capsid is 300 Angstroms in diameter, composed of 60 copies of each capsid protein and enclosing the viral positive strand RNA genome. Capsid protein VP1 mainly forms the vertices of the capsid. Capsid protein VP1 interacts with host cell receptor PVR to provide virion attachment to target host cells. This attachment induces virion internalization predominantly through clathrin- and caveolin-independent endocytosis in Hela cells and through caveolin-mediated endocytosis in brain microvascular endothelial cells. Tyrosine kinases are probably involved in the entry process. Virus binding to PVR induces increased junctional permeability and rearrangement of junctional proteins. Modulation of endothelial tight junctions, as well as cytolytic infection of endothelial cells themselves, may result in loss of endothelial integrity which may help the virus to reach the CNS. After binding to its receptor, the capsid undergoes conformational changes. Capsid protein VP1 N-terminus (that contains an amphipathic alpha-helix) and capsid protein VP4 are externalized. Together, they shape a pore in the host membrane through which viral genome is translocated to host cell cytoplasm. In terms of biological role, forms an icosahedral capsid of pseudo T=3 symmetry with capsid proteins VP2 and VP3. The capsid is 300 Angstroms in diameter, composed of 60 copies of each capsid protein and enclosing the viral positive strand RNA genome. Lies on the inner surface of the capsid shell. After binding to the host receptor, the capsid undergoes conformational changes. Capsid protein VP4 is released, Capsid protein VP1 N-terminus is externalized, and together, they shape a pore in the host membrane through which the viral genome is translocated into the host cell cytoplasm. Its function is as follows. Component of immature procapsids, which is cleaved into capsid proteins VP4 and VP2 after maturation. Allows the capsid to remain inactive before the maturation step. Functionally, cysteine protease that cleaves viral polyprotein and specific host proteins. It is responsible for the autocatalytic cleavage between the P1 and P2 regions, which is the first cleavage occurring in the polyprotein. Also cleaves the host translation initiation factor EIF4G1, in order to shut down the capped cellular mRNA translation. Inhibits the host nucleus-cytoplasm protein and RNA trafficking by cleaving host members of the nuclear pores including NUP98, NUP62 and NUP153. Counteracts stress granule formation probably by antagonizing its assembly or promoting its dissassembly. Cleaves and inhibits host IFIH1/MDA5, thereby inhibiting the type-I IFN production and the establishment of the antiviral state. Cleaves and inhibits host MAVS, thereby inhibiting the type-I IFN production and the establishment of the antiviral state. In terms of biological role, plays an essential role in the virus replication cycle by acting as a viroporin. Creates a pore in the host endoplasmic reticulum and as a consequence releases Ca2+ in the cytoplasm of infected cell. In turn, high levels of cytoplasmic calcium may trigger membrane trafficking and transport of viral ER-associated proteins to viroplasms, sites of viral genome replication. Induces and associates with structural rearrangements of intracellular membranes. Displays RNA-binding, nucleotide binding and NTPase activities. May play a role in virion morphogenesis and viral RNA encapsidation by interacting with the capsid protein VP3. Its function is as follows. Localizes the viral replication complex to the surface of membranous vesicles. Together with protein 3CD binds the Cis-Active RNA Element (CRE) which is involved in RNA synthesis initiation. Acts as a cofactor to stimulate the activity of 3D polymerase, maybe through a nucleid acid chaperone activity. Functionally, localizes the viral replication complex to the surface of membranous vesicles. It inhibits host cell endoplasmic reticulum-to-Golgi apparatus transport and causes the disassembly of the Golgi complex, possibly through GBF1 interaction. This would result in depletion of MHC, trail receptors and IFN receptors at the host cell surface. Plays an essential role in viral RNA replication by recruiting ACBD3 and PI4KB at the viral replication sites, thereby allowing the formation of the rearranged membranous structures where viral replication takes place. In terms of biological role, acts as a primer for viral RNA replication and remains covalently bound to viral genomic RNA. VPg is uridylylated prior to priming replication into VPg-pUpU. The oriI viral genomic sequence may act as a template for this. The VPg-pUpU is then used as primer on the genomic RNA poly(A) by the RNA-dependent RNA polymerase to replicate the viral genome. During genome replication, the VPg-RNA linkage is removed by the host TDP2, thereby accelerating replication. During the late stage of the replication cycle, host TDP2 is excluded from sites of viral RNA synthesis and encapsidation, allowing for the generation of progeny virions. Involved in the viral replication complex and viral polypeptide maturation. It exhibits protease activity with a specificity and catalytic efficiency that is different from protease 3C. Protein 3CD lacks polymerase activity. Protein 3CD binds to the 5'UTR of the viral genome. Its function is as follows. Major viral protease that mediates proteolytic processing of the polyprotein. Cleaves host EIF5B, contributing to host translation shutoff. Also cleaves host PABPC1, contributing to host translation shutoff. Cleaves host RIGI and thus contributes to the inhibition of type I interferon production. Cleaves host NLRP1, triggers host N-glycine-mediated degradation of the autoinhibitory NLRP1 N-terminal fragment. Inhibits the integrated stress response (ISR) in the infected cell by cleaving host G3BP1. Stress granule formation is thus inhibited, which allows protein synthesis and viral replication. Functionally, replicates the viral genomic RNA on the surface of intracellular membranes. May form linear arrays of subunits that propagate along a strong head-to-tail interaction called interface-I. Covalently attaches UMP to a tyrosine of VPg, which is used to prime RNA synthesis. The positive stranded RNA genome is first replicated at virus induced membranous vesicles, creating a dsRNA genomic replication form. This dsRNA is then used as template to synthesize positive stranded RNA genomes. ss(+)RNA genomes are either translated, replicated or encapsidated. This is Genome polyprotein from Homo sapiens (Human).